Reading from the N-terminus, the 379-residue chain is Queuine tRNA-ribosyltransferase (379 aa).

The active-site Proton acceptor is the Asp-94. Substrate contacts are provided by residues 94–98 (DSGGF), Asp-148, Gln-191, and Gly-218. An RNA binding region spans residues 249 to 255 (GVGSPDS). The Nucleophile role is filled by Asp-268. The interval 273–277 (TRIAR) is RNA binding; important for wobble base 34 recognition. The Zn(2+) site is built by Cys-306, Cys-308, Cys-311, and His-337.

Belongs to the queuine tRNA-ribosyltransferase family. As to quaternary structure, homodimer. Within each dimer, one monomer is responsible for RNA recognition and catalysis, while the other monomer binds to the replacement base PreQ1. Zn(2+) is required as a cofactor.

It carries out the reaction 7-aminomethyl-7-carbaguanine + guanosine(34) in tRNA = 7-aminomethyl-7-carbaguanosine(34) in tRNA + guanine. It participates in tRNA modification; tRNA-queuosine biosynthesis. Functionally, catalyzes the base-exchange of a guanine (G) residue with the queuine precursor 7-aminomethyl-7-deazaguanine (PreQ1) at position 34 (anticodon wobble position) in tRNAs with GU(N) anticodons (tRNA-Asp, -Asn, -His and -Tyr). Catalysis occurs through a double-displacement mechanism. The nucleophile active site attacks the C1' of nucleotide 34 to detach the guanine base from the RNA, forming a covalent enzyme-RNA intermediate. The proton acceptor active site deprotonates the incoming PreQ1, allowing a nucleophilic attack on the C1' of the ribose to form the product. After dissociation, two additional enzymatic reactions on the tRNA convert PreQ1 to queuine (Q), resulting in the hypermodified nucleoside queuosine (7-(((4,5-cis-dihydroxy-2-cyclopenten-1-yl)amino)methyl)-7-deazaguanosine). This chain is Queuine tRNA-ribosyltransferase, found in Bacillus cereus (strain G9842).